The primary structure comprises 400 residues: GTPase-binding protein rid1 (400 aa).

The segment covering L16 to S27 has biased composition (polar residues). Residues L16–M47 are disordered. The 362-residue stretch at P39–T400 folds into the GBD/FH3 domain.

The protein resides in the cytoplasm. The sequence is that of GTPase-binding protein rid1 (rid1) from Schizosaccharomyces pombe (strain 972 / ATCC 24843) (Fission yeast).